The chain runs to 125 residues: MNNDLSIYVSKNSGTAVLLLQGNGTDLTCGSEPMAKIVANTTDAAQEKHVPHITKNGNNIDVSVGSVEHPMTPEHFIEWIILVSGDRLEMAKLTPDMKPRAQFHNVTSGTVYAYCNLHSLWKADI.

Fe cation is bound by residues histidine 49, histidine 69, histidine 75, cysteine 115, and histidine 118.

This sequence belongs to the desulfoferrodoxin family. It depends on Cu(2+) as a cofactor.

The catalysed reaction is reduced [rubredoxin] + superoxide + 2 H(+) = oxidized [rubredoxin] + H2O2. Functionally, catalyzes the reduction of superoxide to hydrogen peroxide, using electrons from NADH and NADH:rubredoxin oxidoreductase (NROR) and rubredoxin (Rd) as electron transport intermediaries between NADH and Dfx. Is a key factor in the superoxide reductase dependent part of a pathway for detoxification of reactive oxygen species (ROS) in C.acetobutylicum, an obligate anaerobic bacterium. The polypeptide is Desulfoferrodoxin (dfx) (Clostridium acetobutylicum (strain ATCC 824 / DSM 792 / JCM 1419 / IAM 19013 / LMG 5710 / NBRC 13948 / NRRL B-527 / VKM B-1787 / 2291 / W)).